The primary structure comprises 385 residues: Chaperone protein DnaJ (385 aa).

In terms of domain architecture, J spans 5-70 (DFYEVLGVSR…QKKAAYDQYG (66 aa)). A CR-type zinc finger spans residues 137–214 (GVSKEIEVPT…CHGQGRKQKT (78 aa)). Residues C150, C153, C167, C170, C189, C192, C202, and C205 each contribute to the Zn(2+) site. 4 CXXCXGXG motif repeats span residues 150–157 (CDTCDGSG), 167–174 (CGTCHGHG), 189–196 (CPTCHGKG), and 202–209 (CNECHGQG).

This sequence belongs to the DnaJ family. In terms of assembly, homodimer. It depends on Zn(2+) as a cofactor.

The protein resides in the cytoplasm. Participates actively in the response to hyperosmotic and heat shock by preventing the aggregation of stress-denatured proteins and by disaggregating proteins, also in an autonomous, DnaK-independent fashion. Unfolded proteins bind initially to DnaJ; upon interaction with the DnaJ-bound protein, DnaK hydrolyzes its bound ATP, resulting in the formation of a stable complex. GrpE releases ADP from DnaK; ATP binding to DnaK triggers the release of the substrate protein, thus completing the reaction cycle. Several rounds of ATP-dependent interactions between DnaJ, DnaK and GrpE are required for fully efficient folding. Also involved, together with DnaK and GrpE, in the DNA replication of plasmids through activation of initiation proteins. The protein is Chaperone protein DnaJ of Vibrio harveyi (Beneckea harveyi).